Consider the following 229-residue polypeptide: MAKIGKKLQEAKKLVDKNQFYPLIEAIQLAKKTSYSKFDASIDLAFRLNLDTRKADQQLRGSILLPHGNGKVTRVLVATDSPELQKSSKEAGADFVVDKLELEEIIKQNKFDFDVIVADPKMMPILGRYGKVLGPKGLMPNPKTGTVTPNPDKAVVEIKKGKANYRADKYGIVHSLIGKKSMSDDQLLDNAKVLIDTIKRLKPSVVKGTYIKNLTISSSMGPSIKIKLD.

This sequence belongs to the universal ribosomal protein uL1 family. As to quaternary structure, part of the 50S ribosomal subunit.

In terms of biological role, binds directly to 23S rRNA. The L1 stalk is quite mobile in the ribosome, and is involved in E site tRNA release. Protein L1 is also a translational repressor protein, it controls the translation of the L11 operon by binding to its mRNA. This Mycoplasmopsis pulmonis (strain UAB CTIP) (Mycoplasma pulmonis) protein is Large ribosomal subunit protein uL1.